A 255-amino-acid chain; its full sequence is Ribonuclease PH (255 aa).

Phosphate contacts are provided by residues Arg86 and 124 to 126 (GTR).

The protein belongs to the RNase PH family. Homohexameric ring arranged as a trimer of dimers.

The catalysed reaction is tRNA(n+1) + phosphate = tRNA(n) + a ribonucleoside 5'-diphosphate. Its function is as follows. Phosphorolytic 3'-5' exoribonuclease that plays an important role in tRNA 3'-end maturation. Removes nucleotide residues following the 3'-CCA terminus of tRNAs; can also add nucleotides to the ends of RNA molecules by using nucleoside diphosphates as substrates, but this may not be physiologically important. Probably plays a role in initiation of 16S rRNA degradation (leading to ribosome degradation) during starvation. This is Ribonuclease PH from Aquifex aeolicus (strain VF5).